The chain runs to 322 residues: Peroxisomal adenine nucleotide carrier 1 (322 aa).

3 Solcar repeats span residues 5–94 (LESV…FKRV), 104–184 (IGTK…LKQH), and 202–298 (LSAF…ITAT). 6 helical membrane passes run 8-28 (VSEA…LYPL), 104-124 (IGTK…SVLI), 158-178 (FDGL…YTVF), 201-221 (VLSA…ATVL), 254-274 (IPGV…FKGL), and 286-306 (ALLL…ILAI).

It belongs to the mitochondrial carrier (TC 2.A.29) family. In terms of tissue distribution, expressed in stamens, pollen grains, seeds, leaves, cotyledons, roots, stems, flowers, hypocotyls and siliques.

The protein resides in the peroxisome membrane. Its function is as follows. Peroxisomal adenine nucleotide transporter catalyzing the counterexchange of ATP with AMP. ATP is needed by reactions that generate acyl-CoA for peroxisomal fatty acid beta-oxidation during postgerminative growth. Required for the beta-oxidation reactions involved in auxin biosynthesis and for the conversion of seed-reserved triacylglycerols into sucrose that is necessary for growth before the onset of photosynthesis. In Arabidopsis thaliana (Mouse-ear cress), this protein is Peroxisomal adenine nucleotide carrier 1 (PNC1).